The primary structure comprises 177 residues: Peptide methionine sulfoxide reductase MsrA (177 aa).

Cys-15 is an active-site residue.

Belongs to the MsrA Met sulfoxide reductase family.

The catalysed reaction is L-methionyl-[protein] + [thioredoxin]-disulfide + H2O = L-methionyl-(S)-S-oxide-[protein] + [thioredoxin]-dithiol. The enzyme catalyses [thioredoxin]-disulfide + L-methionine + H2O = L-methionine (S)-S-oxide + [thioredoxin]-dithiol. Its function is as follows. Has an important function as a repair enzyme for proteins that have been inactivated by oxidation. Catalyzes the reversible oxidation-reduction of methionine sulfoxide in proteins to methionine. The sequence is that of Peptide methionine sulfoxide reductase MsrA from Listeria monocytogenes serotype 4b (strain CLIP80459).